The primary structure comprises 1191 residues: Puratrophin-1 (1191 aa).

2 disordered regions span residues 1 to 152 (MERP…DPVG) and 707 to 728 (AGGGALPQASPTVPPPGSSDPR). At Ser-64 the chain carries Phosphoserine. Over residues 111–120 (SHLSLAQGES) the composition is skewed to polar residues. The region spanning 732 to 908 (RLQLVLAEMV…HFQLRHGNDL (177 aa)) is the DH domain. The region spanning 920-1027 (NLKEQGQLVR…WTADISHLLW (108 aa)) is the PH domain. The interval 1150-1176 (SLTAEDSEISSQCPSASGSSGSDSSCV) is disordered. Positions 1159 to 1176 (SSQCPSASGSSGSDSSCV) are enriched in low complexity.

In terms of tissue distribution, expressed in kidney, Leydig cells in the testis, epithelial cells in the prostate gland and Langerhans islet in the pancreas. Isoform 1 and isoform 3 are strongly expressed in Purkinje cells and to a lower extent in other neurons (at protein level). Widely expressed at low levels. More strongly expressed in testis and pancreas.

Functionally, possible role in intracellular signaling and cytoskeleton dynamics at the Golgi. In Homo sapiens (Human), this protein is Puratrophin-1 (PLEKHG4).